A 356-amino-acid chain; its full sequence is DNA polymerase IV (356 aa).

The region spanning 6–187 (IIHIDMDYFF…LDIGDFPGVG (182 aa)) is the UmuC domain. Residues D10 and D105 each contribute to the Mg(2+) site. Residue E106 is part of the active site.

Belongs to the DNA polymerase type-Y family. In terms of assembly, monomer. It depends on Mg(2+) as a cofactor.

The protein localises to the cytoplasm. The catalysed reaction is DNA(n) + a 2'-deoxyribonucleoside 5'-triphosphate = DNA(n+1) + diphosphate. In terms of biological role, poorly processive, error-prone DNA polymerase involved in untargeted mutagenesis. Copies undamaged DNA at stalled replication forks, which arise in vivo from mismatched or misaligned primer ends. These misaligned primers can be extended by PolIV. Exhibits no 3'-5' exonuclease (proofreading) activity. May be involved in translesional synthesis, in conjunction with the beta clamp from PolIII. The polypeptide is DNA polymerase IV (Staphylococcus epidermidis (strain ATCC 12228 / FDA PCI 1200)).